The chain runs to 346 residues: Archaeosine synthase subunit beta (346 aa).

The Radical SAM core domain occupies 36–276 (GVQTKTLTVI…LRQAKAAHPE (241 aa)). C51, C59, and C62 together coordinate [4Fe-4S] cluster.

It belongs to the radical SAM superfamily. RaSEA family. Forms a robust complex with the archaeosine synthase alpha subunit ArcS. This complex likely consists of an alpha(2)beta(2) heterotetrameric structure. The cofactor is [4Fe-4S] cluster.

It catalyses the reaction 7-N-[(5S)-5-amino-5-carboxypentyl]formamidino-7-deazaguanosine(15) in tRNA + S-adenosyl-L-methionine = archaeosine(15) in tRNA + L-1-piperideine-6-carboxylate + 5'-deoxyadenosine + L-methionine + 2 H(+). Its pathway is tRNA modification; archaeosine-tRNA biosynthesis. Radical SAM enzyme involved in the synthesis of archaeosine, a modified nucleoside present in the dihydrouridine loop (D-loop) of archaeal tRNAs. Catalyzes the cleavage of the C(epsilon)-N bond of the lysine moiety of q0kN15-tRNA, leading to the formation of archaeosine at position 15 in tRNAs. The chain is Archaeosine synthase subunit beta from Methanosarcina acetivorans (strain ATCC 35395 / DSM 2834 / JCM 12185 / C2A).